The following is a 251-amino-acid chain: Triosephosphate isomerase (251 aa).

9–11 (NWK) contributes to the substrate binding site. Residue His95 is the Electrophile of the active site. The Proton acceptor role is filled by Glu167. Substrate-binding positions include Gly173, Ser212, and 233–234 (GG).

It belongs to the triosephosphate isomerase family. In terms of assembly, homodimer.

The protein resides in the cytoplasm. It carries out the reaction D-glyceraldehyde 3-phosphate = dihydroxyacetone phosphate. The protein operates within carbohydrate biosynthesis; gluconeogenesis. It functions in the pathway carbohydrate degradation; glycolysis; D-glyceraldehyde 3-phosphate from glycerone phosphate: step 1/1. Involved in the gluconeogenesis. Catalyzes stereospecifically the conversion of dihydroxyacetone phosphate (DHAP) to D-glyceraldehyde-3-phosphate (G3P). This is Triosephosphate isomerase from Pseudomonas putida (strain W619).